A 1051-amino-acid chain; its full sequence is Protein ALWAYS EARLY 2 (1051 aa).

2 stretches are compositionally biased toward basic residues: residues 1–11 (MAPVRKSRSVN) and 27–36 (SKKNKLRKKL). A disordered region spans residues 1 to 37 (MAPVRKSRSVNKRFTNETSPRKDAGKSKKNKLRKKLS). In terms of domain architecture, SANT spans 39–93 (KLGPQWTRLELERFYDAYRKHGQEWRRVAAAIRNSRSVDMVEALFNMNRAYLSLP). Disordered stretches follow at residues 114–158 (EGSG…IGSP), 170–210 (ANGT…RKQF), 225–293 (TDAS…KDTT), 323–375 (AECN…TSGA), 397–605 (SELS…SSRS), and 948–981 (SIEH…NAQM). Residues 120 to 130 (GEGHDASEVPR) are compositionally biased toward basic and acidic residues. A compositionally biased stretch (basic residues) spans 131 to 140 (KQQKRKRAKP). Over residues 279-293 (ESSRERKLDSDKDTT) the composition is skewed to basic and acidic residues. The span at 323–332 (AECNDSDDNG) shows a compositional bias: acidic residues. Basic and acidic residues-rich tracts occupy residues 350–372 (AAIE…DKHT) and 403–417 (LKEE…EKSS). The span at 560-574 (KQVSDSGPTSLSQKP) shows a compositional bias: polar residues. Over residues 586-597 (LQEKAKSSETTH) the composition is skewed to basic and acidic residues. Polar residues predominate over residues 967–981 (NDLNSQDGSEKNAQM).

In terms of assembly, interacts with SNL1 (via PAH3). In terms of tissue distribution, expressed ubiquitously in vegetative and reproductive tissues.

The protein resides in the nucleus. The protein is Protein ALWAYS EARLY 2 (ALY2) of Arabidopsis thaliana (Mouse-ear cress).